The following is a 243-amino-acid chain: MSDNETKETQVAEETQNTVATESNNEDRKGRRGQRGEGRRGERRNRREENHGDELLDRVVTINRVSKTHKGGRTFSFAALVVVGDGNGTVGVGYGKSREVPAAIAKGQLDAKKHMFSVPRVRGTITHPVQGHDAAGTVLLRPAAPGTGVIAGGSVRAVMECAGITDVLTKSMGSATAVNVVRATVDALKQLEEPEEIAARRGLALDEVAPDALLRARAAGIAEARKAREEAAAAKAAEEKDGE.

Over residues 1 to 10 (MSDNETKETQ) the composition is skewed to basic and acidic residues. The disordered stretch occupies residues 1–50 (MSDNETKETQVAEETQNTVATESNNEDRKGRRGQRGEGRRGERRNRREEN). Positions 12–23 (AEETQNTVATES) are enriched in polar residues. Basic and acidic residues predominate over residues 25 to 50 (NEDRKGRRGQRGEGRRGERRNRREEN). Residues 55 to 118 (LLDRVVTINR…LDAKKHMFSV (64 aa)) enclose the S5 DRBM domain.

The protein belongs to the universal ribosomal protein uS5 family. In terms of assembly, part of the 30S ribosomal subunit. Contacts proteins S4 and S8.

Functionally, with S4 and S12 plays an important role in translational accuracy. Located at the back of the 30S subunit body where it stabilizes the conformation of the head with respect to the body. This is Small ribosomal subunit protein uS5 from Bifidobacterium longum (strain DJO10A).